The primary structure comprises 92 residues: Protein EMB-1 (92 aa).

Basic and acidic residues-rich tracts occupy residues 1 to 16, 37 to 61, and 72 to 92; these read MASQQEKKELDARARQ, AEGRSKGGQTRKEQLGGEGYHEMGR, and GGERAEQEGIDIDESKFRTKK. The tract at residues 1-92 is disordered; that stretch reads MASQQEKKEL…IDESKFRTKK (92 aa).

It belongs to the small hydrophilic plant seed protein family. In terms of tissue distribution, expressed in embryogenic cells, somatic embryos and seeds at the later stages of development. In the embryos, expressed in the procambium, the root and shoot meristem and the protoderm of the cotyledons. Not detected in the endosperm or the aleurone layer, in young leaves or roots.

It is found in the nucleus. This is Protein EMB-1 from Daucus carota (Wild carrot).